Consider the following 160-residue polypeptide: Eukaryotic translation initiation factor 5A (160 aa).

Positions 1–12 (MSDEEHHFESKA) are enriched in basic and acidic residues. Positions 1 to 21 (MSDEEHHFESKADAGASKTFP) are disordered. The residue at position 52 (Lys-52) is a Hypusine.

It belongs to the eIF-5A family. Post-translationally, lys-53 undergoes hypusination, a unique post-translational modification that consists in the addition of a butylamino group from spermidine to lysine side chain, leading to the formation of the unusual amino acid hypusine. eIF-5As are the only known proteins to undergo this modification, which is essential for their function.

In terms of biological role, translation factor that promotes translation elongation and termination, particularly upon ribosome stalling at specific amino acid sequence contexts. Binds between the exit (E) and peptidyl (P) site of the ribosome and promotes rescue of stalled ribosome: specifically required for efficient translation of polyproline-containing peptides as well as other motifs that stall the ribosome. Acts as a ribosome quality control (RQC) cofactor by joining the RQC complex to facilitate peptidyl transfer during CAT tailing step. This is Eukaryotic translation initiation factor 5A from Manihot esculenta (Cassava).